The following is a 375-amino-acid chain: Glycogen synthase kinase-3 homolog YGK3 (375 aa).

Residues V41–F329 form the Protein kinase domain. Residues I47 to V55 and K74 each bind ATP. Residue D173 is the Proton acceptor of the active site. S211 carries the post-translational modification Phosphoserine.

The protein belongs to the protein kinase superfamily. Ser/Thr protein kinase family.

The enzyme catalyses L-seryl-[protein] + ATP = O-phospho-L-seryl-[protein] + ADP + H(+). The catalysed reaction is L-threonyl-[protein] + ATP = O-phospho-L-threonyl-[protein] + ADP + H(+). In terms of biological role, required for heat stress-instigated phosphorylation of BCY1 which is involved in cell wall integrity signaling. Regulates activity of MSN2, a transcription factor that binds to the stress-response element (STRE). Probably promotes formation of a complex between MSN2 and DNA. Regulates the stability of ROG1. This Saccharomyces cerevisiae (strain ATCC 204508 / S288c) (Baker's yeast) protein is Glycogen synthase kinase-3 homolog YGK3 (YGK3).